Reading from the N-terminus, the 183-residue chain is Myelin-associated oligodendrocyte basic protein (183 aa).

Residues 68–183 (TRTSRRAKSP…GSPVKASRFW (116 aa)) form a disordered region. A compositionally biased stretch (basic residues) spans 69 to 78 (RTSRRAKSPQ). Residues 79–96 (RPKQQPAAPPAVVRAPAK) are compositionally biased toward low complexity. Tandem repeats lie at residues 97–106 (PRSPPRSERQ), 107–116 (PRSPPRSERQ), 117–126 (PRSPPRSERQ), and 127–136 (PRSPPRSERQ). The 4 X 10 AA tandem repeats of P-R-S-P-P-R-S-E-R-Q stretch occupies residues 97-136 (PRSPPRSERQPRSPPRSERQPRSPPRSERQPRSPPRSERQ). A phosphoserine mark is found at S99 and S109. Residues 101 to 143 (PRSERQPRSPPRSERQPRSPPRSERQPRSPPRSERQPRPRPEV) are compositionally biased toward basic and acidic residues. The span at 151–164 (RPPQKSKQQPRSSP) shows a compositional bias: low complexity.

The protein localises to the cytoplasm. Its subcellular location is the perinuclear region. May play a role in compacting or stabilizing the myelin sheath, possibly by binding the negatively charged acidic phospholipids of the cytoplasmic membrane. The protein is Myelin-associated oligodendrocyte basic protein (MOBP) of Homo sapiens (Human).